We begin with the raw amino-acid sequence, 478 residues long: MVQLNQDFINSIAKDMPAHLTMDDFISYSSKPLRPSIRINTLKISSDEFVTLMAAKGWTLDPIPWCSDGFWVALDNEIQLGNTIEHIQGLFYIQEASSMLPPTALFDGLDNSSEYTILDMASAPGSKTTQMASLMDNKGLLVANEYSSSRVKVLHANVQRMGVYNTALTHFDARVFGEYLYHQFDAILLDAPCSGEGTIRKDPLALRNWSLEENASIIETQKALIESAFLALKTGGSLVYSTCALSRSENQEVCEHLMSCFPQAVEFQSLSELFPDADKSCTSEGFLHVWPQIYDSEGFFIAKVRKVADVERQKPLPKAQRNFPFTAANNKTKDELSHYFKHTFGISLPKDGLIMERDLEYWLFPAKMADFIGKMRFQRIGLKLADGLKKGFKVRHEAIMALSDKHNAIELNESQAIEYLMGRDIPLQDGGKPQGEVILTYHHCALGVAKHLGKRLKNNLPRELVRDKVISAKAKTEL.

Residues 121–127, Glu-145, Asp-172, and Asp-190 contribute to the S-adenosyl-L-methionine site; that span reads ASAPGSK. Cys-243 (nucleophile) is an active-site residue.

The protein belongs to the class I-like SAM-binding methyltransferase superfamily. RsmB/NOP family.

It is found in the cytoplasm. The enzyme catalyses cytidine(1407) in 16S rRNA + S-adenosyl-L-methionine = 5-methylcytidine(1407) in 16S rRNA + S-adenosyl-L-homocysteine + H(+). In terms of biological role, specifically methylates the cytosine at position 1407 (m5C1407) of 16S rRNA. In Shewanella woodyi (strain ATCC 51908 / MS32), this protein is Ribosomal RNA small subunit methyltransferase F.